Reading from the N-terminus, the 852-residue chain is RNA-binding protein 10 (852 aa).

Basic and acidic residues-rich tracts occupy residues 1–14 (MEYE…DRTG) and 21–45 (RSQD…RSYP). A disordered region spans residues 1 to 78 (MEYERRGGRG…RGQLQSHGVQ (78 aa)). In terms of domain architecture, RRM 1 spans 37–132 (RDMDYRSYPR…QKVSMHYSDP (96 aa)). Phosphoserine is present on Ser-61. The RanBP2-type zinc-finger motif lies at 135-165 (KINEDWLCNKCGVQNFKRREKCFKCGVPKSE). Residues 223–307 (DTIILRNLNP…KTINVEFAKG (85 aa)) form the RRM 2 domain. The residue at position 306 (Lys-306) is an N6-acetyllysine. 6 disordered regions span residues 343–365 (GGES…QQDE), 386–410 (KGPG…EGGT), 426–446 (APGL…ATNS), 459–489 (SELQ…YPVP), 542–568 (EQSA…HKTK), and 634–675 (DLPK…EEKL). The segment covering 430 to 446 (YQQSAEGSSGQGTATNS) has biased composition (polar residues). The span at 463–484 (SPTHPSSALPPATSPTAPESYS) shows a compositional bias: low complexity. Residues 545-561 (ADGHKDTGASSKEGKEK) show a composition bias toward basic and acidic residues. Residues Ser-640, Ser-645, Ser-655, Ser-658, and Ser-660 each carry the phosphoserine modification. Residues 665–675 (ERGGPEREEKL) show a composition bias toward basic and acidic residues. The C2H2-type; atypical zinc finger occupies 681-706 (LACLLCRRQFPSKEALIRHQQLSGLH). Ser-703, Ser-719, and Ser-767 each carry phosphoserine. Residues 740 to 783 (AAERREKYGIPEPPEPKRRKYGGISTASVDFEQPTRDGLGSDNI) are disordered. The G-patch domain maps to 780–826 (SDNIGSRMLQAMGWKEGSGLGRKKQGIVTPIEAQTRVRGSGLGARGS). An Omega-N-methylarginine modification is found at Arg-824.

In terms of assembly, associates with the spliceosome. Component of a large chromatin remodeling complex, at least composed of MYSM1, PCAF, RBM10 and KIF11/TRIP5.

It is found in the nucleus. In terms of biological role, binds to ssRNA containing the consensus sequence 5'-AGGUAA-3'. May be involved in post-transcriptional processing, most probably in mRNA splicing. Binds to RNA homopolymers, with a preference for poly(G) and poly(U) and little for poly(A). May bind to specific miRNA hairpins. In Rattus norvegicus (Rat), this protein is RNA-binding protein 10.